Reading from the N-terminus, the 220-residue chain is dITP/XTP pyrophosphatase (220 aa).

A substrate-binding site is contributed by S13–K18. Positions 45 and 74 each coordinate Mg(2+). The active-site Proton acceptor is D74. Residues S75, F163–D166, K186, and H199–R200 contribute to the substrate site.

It belongs to the HAM1 NTPase family. In terms of assembly, homodimer. Mg(2+) is required as a cofactor.

It carries out the reaction XTP + H2O = XMP + diphosphate + H(+). The catalysed reaction is dITP + H2O = dIMP + diphosphate + H(+). It catalyses the reaction ITP + H2O = IMP + diphosphate + H(+). In terms of biological role, pyrophosphatase that catalyzes the hydrolysis of nucleoside triphosphates to their monophosphate derivatives, with a high preference for the non-canonical purine nucleotides XTP (xanthosine triphosphate), dITP (deoxyinosine triphosphate) and ITP. Seems to function as a house-cleaning enzyme that removes non-canonical purine nucleotides from the nucleotide pool, thus preventing their incorporation into DNA/RNA and avoiding chromosomal lesions. The sequence is that of dITP/XTP pyrophosphatase from Brucella melitensis biotype 1 (strain ATCC 23456 / CCUG 17765 / NCTC 10094 / 16M).